We begin with the raw amino-acid sequence, 63 residues long: Small ribosomal subunit protein eS17 (63 aa).

The protein belongs to the eukaryotic ribosomal protein eS17 family.

This Methanococcus aeolicus (strain ATCC BAA-1280 / DSM 17508 / OCM 812 / Nankai-3) protein is Small ribosomal subunit protein eS17.